Consider the following 228-residue polypeptide: PKHD-type hydroxylase RPE_4577 (228 aa).

The Fe2OG dioxygenase domain occupies 78–180 (TIFPPLFNRY…RIASFFWTQS (103 aa)). Positions 98, 100, and 161 each coordinate Fe cation. A 2-oxoglutarate-binding site is contributed by Arg-171.

It depends on Fe(2+) as a cofactor. Requires L-ascorbate as cofactor.

The polypeptide is PKHD-type hydroxylase RPE_4577 (Rhodopseudomonas palustris (strain BisA53)).